A 343-amino-acid polypeptide reads, in one-letter code: Leucine-rich repeat-containing protein 23 (343 aa).

Residues 1–30 (MSDEDDLEDSEPDQDDSEKEEDEKETEEGE) show a composition bias toward acidic residues. The interval 1-47 (MSDEDDLEDSEPDQDDSEKEEDEKETEEGEDYRKEGEEFPEEWLPTP) is disordered. LRR repeat units follow at residues 92-113 (HLRY…NYLT), 114-134 (HLLW…NELP), 135-155 (YLQI…ISHP), 156-177 (RLET…DPEK), 180-200 (SLHT…INLP), 201-222 (KLKN…EDLS), 223-244 (NLTT…SREM), and 246-267 (SLQY…AKLR). Residues 208-343 (AQNMLKKVEG…RDLEPEQSLI (136 aa)) form an interaction with RSPH9 region. In terms of domain architecture, LRRCT spans 280–318 (NPCTDETSYRQEALVQMPYLERLDKEFYEEEERAEADVI). Positions 307–329 (YEEEERAEADVIRQRLKEEKEQE) form a coiled coil. The span at 318–337 (IRQRLKEEKEQEPEPQRDLE) shows a compositional bias: basic and acidic residues. The tract at residues 318-343 (IRQRLKEEKEQEPEPQRDLEPEQSLI) is disordered.

In terms of assembly, component of the axonemal radial spoke complex. Interacts with RSPH3. Interacts with RSPH9. As to expression, expressed in spermatozoa.

It is found in the cell projection. The protein resides in the cilium. The protein localises to the flagellum. Its subcellular location is the cytoplasm. It localises to the cytoskeleton. It is found in the flagellum axoneme. Its function is as follows. Essential for sperm motility and male fertility. Plays an important role in the proper assembly of the third radial spoke (RS3) head and the bridge structure between RS2 and RS3 in the sperm flagella. This Homo sapiens (Human) protein is Leucine-rich repeat-containing protein 23 (LRRC23).